We begin with the raw amino-acid sequence, 604 residues long: Deuterosome assembly protein 1 (604 aa).

4 coiled-coil regions span residues 14–59 (CEAE…NAQT), 85–197 (MTQN…GKKQ), 226–278 (IIEK…ELQS), and 336–399 (QDQP…KQLK). Ser-547 carries the phosphoserine modification. A coiled-coil region spans residues 558 to 601 (AAQHFLLEEEKRAKELEKLLNTHIDELQRHTEFTLNKYSKLKQN).

It belongs to the CEP63 family. As to quaternary structure, interacts with CEP152; the interaction is mutually exclusive with CEP63.

It is found in the cytoplasm. In terms of biological role, key structural component of the deuterosome, a structure that promotes de novo centriole amplification in multiciliated cells. Deuterosome-mediated centriole amplification occurs in terminally differentiated multiciliated cells and can generate more than 100 centrioles. Probably sufficient for the specification and formation of the deuterosome inner core. Interacts with CEP152 and recruits PLK4 to activate centriole biogenesis. In Homo sapiens (Human), this protein is Deuterosome assembly protein 1.